The chain runs to 285 residues: Short chain dehydrogenase sol3 (285 aa).

Positions 39, 64, and 87 each coordinate NADP(+). Active-site proton donor residues include Ser-168 and Tyr-200. Residues Tyr-200, Lys-204, and Ser-234 each coordinate NADP(+). The active-site Lowers pKa of active site Tyr is Lys-204.

The protein belongs to the short-chain dehydrogenases/reductases (SDR) family.

Its pathway is phytotoxin biosynthesis. Short chain dehydrogenase; part of the gene cluster that mediates the biosynthesis of the phytotoxin solanapyrone, a causal agent of early blight disease of potato and tomato. The prosolanapyrone synthase sol1 is a polyketide synthase that produces the octaketide desmethylprosolanapyrone I via sequential condensations of 7 malonyl-CoA units with one acetyl-CoA unit, and one methylation step. The octaketide backbone is further methylated by the sol2 O-methyltransferase to yield prosolanapyrone I. Prosolanapyrone I is hydroxylated to prosolanapyrone II by the cytochrome P450 monooxygenase sol6. The solanapyrone synthase sol5 then catalyzes the oxidation of prosolanapyrone II and the subsequent Diels Alder cycloisomerization of the product prosolanapyrone III to solanapyrones A and D. Solanapyrones A and D are then converted into solanapyrones B and E, respectively, by the sol3 dehydrogenase. This is Short chain dehydrogenase sol3 (sol3) from Alternaria solani.